We begin with the raw amino-acid sequence, 251 residues long: MSYISMKQLLEAGVHFGHETKRWNPKFKRFIFAERNGIFIIDLQKTLKQVDRSFDYIKDLSERGGVILFVGTKKQAQEIVELEARRTGMPFVTSRWLGGMLTNFKTMRTRIDRLTELDELFESGRINDRLKAERIKLGAERERLQRFVGGIRKMTRLPDAIFVVDPTKEVIAVQEANKLGIPVIALADTDSDPDVIDYIVPGNDDAIRSIQLITHRIGDLLVEARGGGEDVAAEGMEQGAQTDEQAEEVQA.

It belongs to the universal ribosomal protein uS2 family.

The protein is Small ribosomal subunit protein uS2 of Deinococcus deserti (strain DSM 17065 / CIP 109153 / LMG 22923 / VCD115).